A 146-amino-acid chain; its full sequence is Hemoglobin subunit beta (146 aa).

Val1 carries the post-translational modification N-acetylvaline. In terms of domain architecture, Globin spans 2–146 (HLTPEEKNAV…VANALAHKYH (145 aa)). At Thr12 the chain carries Phosphothreonine. Ser44 carries the phosphoserine modification. N6-acetyllysine is present on Lys59. His63 serves as a coordination point for heme b. Residue Lys82 is modified to N6-acetyllysine. His92 contacts heme b. Cys93 is modified (S-nitrosocysteine). Lys144 is modified (N6-acetyllysine).

The protein belongs to the globin family. In terms of assembly, heterotetramer of two alpha chains and two beta chains. Red blood cells.

In terms of biological role, involved in oxygen transport from the lung to the various peripheral tissues. The polypeptide is Hemoglobin subunit beta (HBB) (Theropithecus gelada (Gelada baboon)).